Reading from the N-terminus, the 382-residue chain is Toluene efflux pump periplasmic linker protein TtgD (382 aa).

An N-terminal signal peptide occupies residues 1–23 (MRLERALRARQLIPLAAIWLLVG). Cys24 carries the N-palmitoyl cysteine lipid modification. Cys24 carries the S-diacylglycerol cysteine lipid modification. The stretch at 100 to 136 (YEALLARAEASLLTAQNLARRYERLLDTNAISQQQYD) forms a coiled coil.

The protein belongs to the membrane fusion protein (MFP) (TC 8.A.1) family.

It localises to the cell inner membrane. The periplasmic linker protein component of an inducible organic solvent efflux pump. Involved in export of toluene and styrene but not of m-xylene, propylbenzene or ethylbenzene. Is not involved in antibiotic or AMP efflux. In Pseudomonas putida (strain DOT-T1E), this protein is Toluene efflux pump periplasmic linker protein TtgD (ttgD).